Consider the following 379-residue polypeptide: ATP phosphoribosyltransferase regulatory subunit (379 aa).

This sequence belongs to the class-II aminoacyl-tRNA synthetase family. HisZ subfamily. As to quaternary structure, heteromultimer composed of HisG and HisZ subunits.

It is found in the cytoplasm. It participates in amino-acid biosynthesis; L-histidine biosynthesis; L-histidine from 5-phospho-alpha-D-ribose 1-diphosphate: step 1/9. Functionally, required for the first step of histidine biosynthesis. May allow the feedback regulation of ATP phosphoribosyltransferase activity by histidine. The sequence is that of ATP phosphoribosyltransferase regulatory subunit from Paramagnetospirillum magneticum (strain ATCC 700264 / AMB-1) (Magnetospirillum magneticum).